Reading from the N-terminus, the 76-residue chain is Repressor protein of division inhibition gene dicB (76 aa).

Residues 13-33 (KTKLAQAAGIRLASLYSWKGD) mediate DNA binding.

This protein is a repressor of division inhibition gene dicB. The polypeptide is Repressor protein of division inhibition gene dicB (dicC) (Escherichia coli (strain K12)).